An 83-amino-acid polypeptide reads, in one-letter code: MTPETVQIASILGAAFAVGIGSLGPALGEGRAVAAAMEAIARQPEAAGTLSRTLFVGLAMIETMAIYCLVIALLLLFANPFTG.

A run of 2 helical transmembrane segments spans residues 8-28 and 58-78; these read IASILGAAFAVGIGSLGPALG and LAMIETMAIYCLVIALLLLFA.

The protein belongs to the ATPase C chain family. F-type ATPases have 2 components, F(1) - the catalytic core - and F(0) - the membrane proton channel. F(1) has five subunits: alpha(3), beta(3), gamma(1), delta(1), epsilon(1). F(0) has four main subunits: a(1), b(1), b'(1) and c(10-14). The alpha and beta chains form an alternating ring which encloses part of the gamma chain. F(1) is attached to F(0) by a central stalk formed by the gamma and epsilon chains, while a peripheral stalk is formed by the delta, b and b' chains.

The protein resides in the cell inner membrane. In terms of biological role, f(1)F(0) ATP synthase produces ATP from ADP in the presence of a proton or sodium gradient. F-type ATPases consist of two structural domains, F(1) containing the extramembraneous catalytic core and F(0) containing the membrane proton channel, linked together by a central stalk and a peripheral stalk. During catalysis, ATP synthesis in the catalytic domain of F(1) is coupled via a rotary mechanism of the central stalk subunits to proton translocation. Key component of the F(0) channel; it plays a direct role in translocation across the membrane. A homomeric c-ring of between 10-14 subunits forms the central stalk rotor element with the F(1) delta and epsilon subunits. This chain is ATP synthase subunit c 2, found in Cereibacter sphaeroides (strain ATCC 17029 / ATH 2.4.9) (Rhodobacter sphaeroides).